A 58-amino-acid polypeptide reads, in one-letter code: NADH dehydrogenase [ubiquinone] 1 beta subcomplex subunit 1 (58 aa).

The chain crosses the membrane as a helical span at residues His-11–Leu-27.

It belongs to the complex I NDUFB1 subunit family. Complex I is composed of 45 different subunits.

Its subcellular location is the mitochondrion inner membrane. In terms of biological role, accessory subunit of the mitochondrial membrane respiratory chain NADH dehydrogenase (Complex I) that is believed not to be involved in catalysis. Complex I functions in the transfer of electrons from NADH to the respiratory chain. The immediate electron acceptor for the enzyme is believed to be ubiquinone. This is NADH dehydrogenase [ubiquinone] 1 beta subcomplex subunit 1 (NDUFB1) from Homo sapiens (Human).